We begin with the raw amino-acid sequence, 256 residues long: Protein CC2D2B homolog (256 aa).

The interval M1–A24 is disordered. Over residues I13 to L22 the composition is skewed to basic and acidic residues. Coiled coils occupy residues D136–I159 and E194–K214.

This Macaca fascicularis (Crab-eating macaque) protein is Protein CC2D2B homolog.